The sequence spans 490 residues: ATP synthase subunit alpha 1 (490 aa).

It belongs to the ATPase alpha/beta chains family. As to quaternary structure, F-type ATPases have 2 components, CF(1) - the catalytic core - and CF(0) - the membrane proton channel. CF(1) has five subunits: alpha(3), beta(3), gamma(1), delta(1), epsilon(1). CF(0) has three main subunits: a(1), b(2) and c(9-12). The alpha and beta chains form an alternating ring which encloses part of the gamma chain. CF(1) is attached to CF(0) by a central stalk formed by the gamma and epsilon chains, while a peripheral stalk is formed by the delta and b chains.

The protein localises to the cell inner membrane. The enzyme catalyses ATP + H2O + 4 H(+)(in) = ADP + phosphate + 5 H(+)(out). Functionally, produces ATP from ADP in the presence of a proton gradient across the membrane. The alpha chain is a regulatory subunit. In Legionella pneumophila (strain Paris), this protein is ATP synthase subunit alpha 1.